A 200-amino-acid polypeptide reads, in one-letter code: Dephospho-CoA kinase (200 aa).

A DPCK domain is found at 3–200 (IFGLTGGIGS…LNVNNKCNMD (198 aa)). 11-16 (GSGKSL) is an ATP binding site.

Belongs to the CoaE family.

The protein localises to the cytoplasm. It carries out the reaction 3'-dephospho-CoA + ATP = ADP + CoA + H(+). It functions in the pathway cofactor biosynthesis; coenzyme A biosynthesis; CoA from (R)-pantothenate: step 5/5. In terms of biological role, catalyzes the phosphorylation of the 3'-hydroxyl group of dephosphocoenzyme A to form coenzyme A. In Ehrlichia canis (strain Jake), this protein is Dephospho-CoA kinase.